A 582-amino-acid polypeptide reads, in one-letter code: Isopropyl malate synthase AMT7 (582 aa).

The Pyruvate carboxyltransferase domain maps to 61 to 341 (PVLFSTDLRD…EPGIDLSRLD (281 aa)).

This sequence belongs to the alpha-IPM synthase/homocitrate synthase family. LeuA type 2 subfamily.

It carries out the reaction 3-methyl-2-oxobutanoate + acetyl-CoA + H2O = (2S)-2-isopropylmalate + CoA + H(+). It participates in mycotoxin biosynthesis. Functionally, isopropyl malate synthase; part of the gene clusters that mediate the biosynthesis of AM-toxins, host-selective toxins (HSTs) causing Alternaria blotch on apple, a worldwide distributed disease. AM-toxins are cyclic depsipeptides containing the 3 residues 2-hydroxy-isovaleric acid (2-HIV), dehydroalanine, L-alanine which are common for all 3 AM-toxins I to III. The fourth precursor is L-alpha-amino-methoxyphenyl-valeric acid (L-Amv) for AM-toxin I, L-alpha-amino-phenyl-valeric acid (L-Apv) for AM-toxin II, and L-alpha-amino-hydroxyphenyl-valeric acid (L-Ahv) for AM-toxin III. AM-toxins have two target sites for affecting susceptible apple cells; they cause invagination of the plasma membrane and electrolyte loss and chloroplast disorganization. The non-ribosomal peptide synthetase AMT1 contains 4 catalytic modules and is responsible for activation of each residue in AM-toxin. The aldo-keto reductase AMT2 catalyzes the conversion of 2-keto-isovaleric acid (2-KIV) to 2-hydroxy-isovaleric acid (2-HIV), one of the precursor residues incorporated by AMT1 during AM-toxin biosynthesis, by reduction of its ketone to an alcohol. The cytochrome P450 monooxygenase AMT3 and the thioesterase AMT4 are also important for AM-toxin production, but their exact function within the AM-toxin biosynthesis are not known yet. Up to 21 proteins (including AMT1 to AMT4) are predicted to be involved in AM-toxin biosynthesis since their expression ishighly up-regulated in AM-toxin-producing cultures. The polypeptide is Isopropyl malate synthase AMT7 (Alternaria alternata (Alternaria rot fungus)).